The primary structure comprises 259 residues: tRNA-cytidine(32) 2-sulfurtransferase (259 aa).

The short motif at 40 to 45 is the PP-loop motif element; that stretch reads SGGKDS. [4Fe-4S] cluster contacts are provided by cysteine 114, cysteine 117, and cysteine 205.

Belongs to the TtcA family. Homodimer. The cofactor is Mg(2+). [4Fe-4S] cluster serves as cofactor.

Its subcellular location is the cytoplasm. It carries out the reaction cytidine(32) in tRNA + S-sulfanyl-L-cysteinyl-[cysteine desulfurase] + AH2 + ATP = 2-thiocytidine(32) in tRNA + L-cysteinyl-[cysteine desulfurase] + A + AMP + diphosphate + H(+). Its pathway is tRNA modification. Functionally, catalyzes the ATP-dependent 2-thiolation of cytidine in position 32 of tRNA, to form 2-thiocytidine (s(2)C32). The sulfur atoms are provided by the cysteine/cysteine desulfurase (IscS) system. In Bdellovibrio bacteriovorus (strain ATCC 15356 / DSM 50701 / NCIMB 9529 / HD100), this protein is tRNA-cytidine(32) 2-sulfurtransferase.